A 157-amino-acid chain; its full sequence is Ribosomal RNA large subunit methyltransferase H (157 aa).

S-adenosyl-L-methionine contacts are provided by residues L73, G105, and 124–129 (LSKMTF).

The protein belongs to the RNA methyltransferase RlmH family. Homodimer.

It is found in the cytoplasm. The catalysed reaction is pseudouridine(1915) in 23S rRNA + S-adenosyl-L-methionine = N(3)-methylpseudouridine(1915) in 23S rRNA + S-adenosyl-L-homocysteine + H(+). Its function is as follows. Specifically methylates the pseudouridine at position 1915 (m3Psi1915) in 23S rRNA. This Christiangramia forsetii (strain DSM 17595 / CGMCC 1.15422 / KT0803) (Gramella forsetii) protein is Ribosomal RNA large subunit methyltransferase H.